Consider the following 351-residue polypeptide: Outer membrane porin PhoE (351 aa).

The N-terminal stretch at 1 to 21 (MKKSTLALVVMGITASASVQA) is a signal peptide.

This sequence belongs to the Gram-negative porin family. In terms of assembly, homotrimer.

The protein localises to the cell outer membrane. Functionally, uptake of inorganic phosphate, phosphorylated compounds, and some other negatively charged solutes. The chain is Outer membrane porin PhoE (phoE) from Citrobacter freundii.